The chain runs to 198 residues: NAD(P)H dehydrogenase (quinone) (198 aa).

The region spanning 4-189 is the Flavodoxin-like domain; the sequence is ILVLYYSMYG…SIARYQGEYV (186 aa). FMN contacts are provided by residues 10-15 and 78-80; these read SMYGHI and TRF. Y12 serves as a coordination point for NAD(+). A substrate-binding site is contributed by W98. FMN is bound by residues 113 to 118 and H133; that span reads STGTGG.

Belongs to the WrbA family. The cofactor is FMN.

The catalysed reaction is a quinone + NADH + H(+) = a quinol + NAD(+). It catalyses the reaction a quinone + NADPH + H(+) = a quinol + NADP(+). In Salmonella paratyphi B (strain ATCC BAA-1250 / SPB7), this protein is NAD(P)H dehydrogenase (quinone).